Here is a 91-residue protein sequence, read N- to C-terminus: Defensin-like protein 220 (91 aa).

The N-terminal stretch at 1–19 (MKTIFFFITFIVLVSSCTS) is a signal peptide. Cystine bridges form between Cys-61-Cys-78, Cys-64-Cys-83, and Cys-68-Cys-85.

The protein belongs to the DEFL family.

It is found in the secreted. This Arabidopsis thaliana (Mouse-ear cress) protein is Defensin-like protein 220.